The sequence spans 171 residues: Large ribosomal subunit protein uL10 (171 aa).

It belongs to the universal ribosomal protein uL10 family. In terms of assembly, part of the ribosomal stalk of the 50S ribosomal subunit. The N-terminus interacts with L11 and the large rRNA to form the base of the stalk. The C-terminus forms an elongated spine to which L12 dimers bind in a sequential fashion forming a multimeric L10(L12)X complex.

Forms part of the ribosomal stalk, playing a central role in the interaction of the ribosome with GTP-bound translation factors. This Corynebacterium glutamicum (strain ATCC 13032 / DSM 20300 / JCM 1318 / BCRC 11384 / CCUG 27702 / LMG 3730 / NBRC 12168 / NCIMB 10025 / NRRL B-2784 / 534) protein is Large ribosomal subunit protein uL10.